The following is a 239-amino-acid chain: Skn-1 dependent zygotic transcript 1 protein (239 aa).

Expressed in mesendodermal precursor cells of embryos.

Its function is as follows. May have a role in mesendoderm development during embryogenesis. The protein is Skn-1 dependent zygotic transcript 1 protein (sdz-1) of Caenorhabditis elegans.